Here is a 526-residue protein sequence, read N- to C-terminus: MLMLLVRGTHYENLRSKVVLPTPLAGRSTETFVSEFPGPDTGIRWRRSDEALRVNVGGVRRQLSARALARFPGTRLGRLHAAASEEQARRLCDDYDEAAREFYFDRHPGFFLSLLHFYRTGHLHVLDELCVFAFGQEADYWGLGENALAACCRARYLERRLTQPHAWDEDSDTPSSVDPCPDEISDVQRELARYGAARCGRLRRRLWLTMENPGYSLPSKLFSCVSISVVLASIAAMCIHSLPEYQAREAAAAVAAVAAGRSPEGVRDDPVLRRLEYFCIAWFSFEVSSRLLLAPSTRNFFCHPLNLIDIVSVLPFYLTLLAGVALGDQGGKEFGHLGKVVQVFRLMRIFRVLKLARHSTGLRSLGATLKHSYREVGILLLYLAVGVSVFSGVAYTAEKEEDVGFNTIPACWWWGTVSMTTVGYGDVVPVTVAGKLAASGCILGGILVVALPITIIFNKFSHFYRRQKALEAAVRNSNHREFEDLLSSVDGVSEASLETSGETSQEGRSADLESQAPSEPPHPQRY.

The Cytoplasmic portion of the chain corresponds to 1–217 (MLMLLVRGTH…LTMENPGYSL (217 aa)). A helical transmembrane segment spans residues 218–239 (PSKLFSCVSISVVLASIAAMCI). Over 240–270 (HSLPEYQAREAAAAVAAVAAGRSPEGVRDDP) the chain is Extracellular. The chain crosses the membrane as a helical span at residues 271-293 (VLRRLEYFCIAWFSFEVSSRLLL). Residues 294-304 (APSTRNFFCHP) are Cytoplasmic-facing. Residues 305-322 (LNLIDIVSVLPFYLTLLA) form a helical membrane-spanning segment. Over 323–337 (GVALGDQGGKEFGHL) the chain is Extracellular. A helical; Voltage-sensor membrane pass occupies residues 338–358 (GKVVQVFRLMRIFRVLKLARH). At 359–373 (STGLRSLGATLKHSY) the chain is on the cytoplasmic side. Residues 374 to 395 (REVGILLLYLAVGVSVFSGVAY) form a helical membrane-spanning segment. The Extracellular portion of the chain corresponds to 396-408 (TAEKEEDVGFNTI). The helical intramembrane region spans 409-420 (PACWWWGTVSMT). Residues 421–426 (TVGYGD) carry the Selectivity filter motif. An intramembrane segment occupies 421 to 428 (TVGYGDVV). Residues 429–435 (PVTVAGK) are Extracellular-facing. The helical transmembrane segment at 436-464 (LAASGCILGGILVVALPITIIFNKFSHFY) threads the bilayer. Residues 465 to 526 (RRQKALEAAV…PSEPPHPQRY (62 aa)) lie on the Cytoplasmic side of the membrane. Residues 492-526 (VSEASLETSGETSQEGRSADLESQAPSEPPHPQRY) form a disordered region. A compositionally biased stretch (polar residues) spans 496–507 (SLETSGETSQEG).

This sequence belongs to the potassium channel family. S (TC 1.A.1.2) subfamily. Kv9.1/KCNS1 sub-subfamily. As to quaternary structure, heterotetramer with KCNB1. Heterotetramer with KCNB2. Does not form homomultimers.

The protein localises to the cell membrane. Functionally, potassium channel regulatory subunit that modulate the delayed rectifier voltage-gated potassium channel activity of KCNB1 and KCNB2 by altering their kinetics, expression levels, and shifting the half-inactivation potential to more polarized values. While it does not form functional channels on its own, it can form functional heterotetrameric channels with KCNB1 and KCNB2. Each regulatory subunit has unique regulatory properties that can lead to extensive inhibition, significant changes in kinetics, and/or substantial shifts in the voltage dependencies of the inactivation process. The chain is Delayed-rectifier potassium channel regulatory subunit KCNS1 from Gorilla gorilla gorilla (Western lowland gorilla).